Here is a 468-residue protein sequence, read N- to C-terminus: Replication factor C large subunit (468 aa).

50–57 (GPPGSGKT) contributes to the ATP binding site. A disordered region spans residues 422-456 (EEKAVEEKVEEEEAEEEEEEERKEEEKPKAEKKKG). Positions 429-444 (KVEEEEAEEEEEEERK) are enriched in acidic residues.

The protein belongs to the activator 1 small subunits family. RfcL subfamily. In terms of assembly, heteromultimer composed of small subunits (RfcS) and large subunits (RfcL).

Part of the RFC clamp loader complex which loads the PCNA sliding clamp onto DNA. In Pyrococcus horikoshii (strain ATCC 700860 / DSM 12428 / JCM 9974 / NBRC 100139 / OT-3), this protein is Replication factor C large subunit.